A 101-amino-acid chain; its full sequence is CRISPR-associated endoribonuclease Cas2 (101 aa).

Mg(2+) is bound at residue aspartate 8.

The protein belongs to the CRISPR-associated endoribonuclease Cas2 protein family. In terms of assembly, homodimer, forms a heterotetramer with a Cas1 homodimer. Mg(2+) is required as a cofactor.

Functionally, CRISPR (clustered regularly interspaced short palindromic repeat), is an adaptive immune system that provides protection against mobile genetic elements (viruses, transposable elements and conjugative plasmids). CRISPR clusters contain sequences complementary to antecedent mobile elements and target invading nucleic acids. CRISPR clusters are transcribed and processed into CRISPR RNA (crRNA). Functions as a ssRNA-specific endoribonuclease. Involved in the integration of spacer DNA into the CRISPR cassette. The protein is CRISPR-associated endoribonuclease Cas2 of Treponema denticola (strain ATCC 35405 / DSM 14222 / CIP 103919 / JCM 8153 / KCTC 15104).